The chain runs to 315 residues: Large ribosomal subunit protein uL29m (315 aa).

It belongs to the universal ribosomal protein uL29 family. As to quaternary structure, component of the mitochondrial large ribosomal subunit. Mature mitochondrial ribosomes consist of a small (37S) and a large (54S) subunit. The 37S subunit contains at least 33 different proteins and 1 molecule of RNA (15S). The 54S subunit contains at least 45 different proteins and 1 molecule of RNA (21S).

It localises to the mitochondrion. The polypeptide is Large ribosomal subunit protein uL29m (MRPL4) (Candida glabrata (strain ATCC 2001 / BCRC 20586 / JCM 3761 / NBRC 0622 / NRRL Y-65 / CBS 138) (Yeast)).